A 128-amino-acid polypeptide reads, in one-letter code: MFQAAGAAQATPSHEAKGSSGNSTVQRSKSFSLRAQVKETCAACQKTVYPMERLVADKLIFHNSCFCCKHCHTKLSLGSYAAMHGEFYCKPHFQQLFKSKGNYDEGFGRKQHKELWAHKEVDSGTKTA.

Met1 bears the N-acetylmethionine mark. The segment at 1 to 25 (MFQAAGAAQATPSHEAKGSSGNSTV) is disordered. The LIM zinc-binding domain maps to 39–99 (ETCAACQKTV…KPHFQQLFKS (61 aa)). 8 residues coordinate Zn(2+): Cys41, Cys44, His62, Cys65, Cys68, Cys71, Cys89, and His92.

Interacts with ILK.

The protein localises to the cytoplasm. It localises to the nucleus. Functionally, acts as an activator of the protein-kinase ILK, thereby regulating cell motility. The sequence is that of LIM domain-containing protein 2 (Limd2) from Rattus norvegicus (Rat).